A 419-amino-acid chain; its full sequence is Hyaluronidase-3 (419 aa).

Residues 1–16 (MTMQLGLALVLGVAMC) form the signal peptide. Intrachain disulfides connect cysteine 42–cysteine 331, cysteine 205–cysteine 220, cysteine 356–cysteine 367, cysteine 361–cysteine 395, and cysteine 397–cysteine 406. The N-linked (GlcNAc...) asparagine glycan is linked to asparagine 69. Glutamate 129 serves as the catalytic Proton donor. N-linked (GlcNAc...) asparagine glycosylation is present at asparagine 215. The EGF-like domain maps to 352 to 407 (AAMACSHQRCHGHGRCAWQDPGQLKVFLHLHPGGSPGAWESFSCRCYWGWAGPTCQ).

It belongs to the glycosyl hydrolase 56 family. In terms of processing, N-glycosylated. In terms of tissue distribution, highly expressed in bladder, spleen and liver. Expressed at low levels in the kidney.

Its subcellular location is the secreted. The protein resides in the cell membrane. The protein localises to the cytoplasmic vesicle. It localises to the secretory vesicle. It is found in the acrosome. Its subcellular location is the endoplasmic reticulum. The protein resides in the early endosome. The enzyme catalyses Random hydrolysis of (1-&gt;4)-linkages between N-acetyl-beta-D-glucosamine and D-glucuronate residues in hyaluronate.. Its function is as follows. Facilitates sperm penetration into the layer of cumulus cells surrounding the egg by digesting hyaluronic acid. Involved in induction of the acrosome reaction in the sperm. Involved in follicular atresia, the breakdown of immature ovarian follicles that are not selected to ovulate. Induces ovarian granulosa cell apoptosis, possibly via apoptotic signaling pathway involving CASP8 and CASP3 activation, and poly(ADP-ribose) polymerase (PARP) cleavage. Has no hyaluronidase activity in embryonic fibroblasts in vitro. Has no hyaluronidase activity in granulosa cells in vitro. In Sus scrofa (Pig), this protein is Hyaluronidase-3 (HYAL3).